A 512-amino-acid chain; its full sequence is UDP-N-acetylmuramate--L-alanine ligase (512 aa).

132 to 138 (GAHGKTT) is an ATP binding site.

The protein belongs to the MurCDEF family.

The protein localises to the cytoplasm. It carries out the reaction UDP-N-acetyl-alpha-D-muramate + L-alanine + ATP = UDP-N-acetyl-alpha-D-muramoyl-L-alanine + ADP + phosphate + H(+). The protein operates within cell wall biogenesis; peptidoglycan biosynthesis. In terms of biological role, cell wall formation. This Bifidobacterium longum (strain DJO10A) protein is UDP-N-acetylmuramate--L-alanine ligase.